Reading from the N-terminus, the 342-residue chain is GTPase Obg (342 aa).

The Obg domain occupies 1–159 (MKFLDLCKVY…RTIWLRLKLI (159 aa)). One can recognise an OBG-type G domain in the interval 160-327 (ADAGLLGLPN…VLRALWAEID (168 aa)). Residues 166–173 (GLPNAGKS), 191–195 (FTTLV), 212–215 (DIPG), 279–282 (NKID), and 308–310 (SGV) each bind GTP. The Mg(2+) site is built by Ser-173 and Thr-193.

Belongs to the TRAFAC class OBG-HflX-like GTPase superfamily. OBG GTPase family. In terms of assembly, monomer. The cofactor is Mg(2+).

It localises to the cytoplasm. Its function is as follows. An essential GTPase which binds GTP, GDP and possibly (p)ppGpp with moderate affinity, with high nucleotide exchange rates and a fairly low GTP hydrolysis rate. Plays a role in control of the cell cycle, stress response, ribosome biogenesis and in those bacteria that undergo differentiation, in morphogenesis control. The polypeptide is GTPase Obg (Cereibacter sphaeroides (strain ATCC 17025 / ATH 2.4.3) (Rhodobacter sphaeroides)).